The primary structure comprises 49 residues: Small, acid-soluble spore protein O (49 aa).

The interval 1-49 (MVKRKANHVIPGMNDASAQGKGAGYNEELSNEPLTEAQKQNNKKRKKNQ) is disordered.

The protein belongs to the SspO family.

It localises to the spore core. In Anoxybacillus flavithermus (strain DSM 21510 / WK1), this protein is Small, acid-soluble spore protein O.